Here is a 520-residue protein sequence, read N- to C-terminus: GMP synthase [glutamine-hydrolyzing] (520 aa).

Positions 13-205 constitute a Glutamine amidotransferase type-1 domain; the sequence is KIIVLDYGSQ…ALNICKAKGD (193 aa). The Nucleophile role is filled by C90. Catalysis depends on residues H179 and E181. Residues 206–395 enclose the GMPS ATP-PPase domain; sequence WSMDNFIDMQ…LGMPDHIVWR (190 aa). Position 233–239 (233–239) interacts with ATP; that stretch reads SGGVDSS.

As to quaternary structure, homodimer.

The enzyme catalyses XMP + L-glutamine + ATP + H2O = GMP + L-glutamate + AMP + diphosphate + 2 H(+). It functions in the pathway purine metabolism; GMP biosynthesis; GMP from XMP (L-Gln route): step 1/1. Its function is as follows. Catalyzes the synthesis of GMP from XMP. The sequence is that of GMP synthase [glutamine-hydrolyzing] from Streptococcus pneumoniae (strain P1031).